Consider the following 257-residue polypeptide: MGDKKSPTRPKRQAKPTADNGFWDCSVCTFRNSAEAFKCSICDVRKGTSTRKPRINSQLVAQQVAQQYATPPPPKKEKKEKPERPEKDRAEEERPDINPPDEHPVEQRDKDKSEKEQPEKEKKDREKEIIPAITKKPNSKKNRPKSDIHQSPPSERNSIQSGKSTTKTKNSHNSRPKLKNIDRSTAQQLAITVGNVTVIITDFKEKTRTSSTSSSTVTSSASSEQQHQSSGSESMDKGSSRASTPKGDLSLGHDESF.

Disordered stretches follow at residues 1–24 and 45–257; these read MGDK…GFWD and RKGT…DESF. A RanBP2-type zinc finger spans residues 19–48; sequence DNGFWDCSVCTFRNSAEAFKCSICDVRKGT. The span at 74–129 shows a compositional bias: basic and acidic residues; sequence PKKEKKEKPERPEKDRAEEERPDINPPDEHPVEQRDKDKSEKEQPEKEKKDREKEI. A compositionally biased stretch (polar residues) spans 149–168; sequence HQSPPSERNSIQSGKSTTKT. A compositionally biased stretch (basic residues) spans 169–178; that stretch reads KNSHNSRPKL. Over residues 209-233 the composition is skewed to low complexity; the sequence is TSSTSSSTVTSSASSEQQHQSSGSE.

It is found in the nucleus. Its subcellular location is the cytoplasm. Functionally, may be implicated in the regulation of the transcription as a repressor of the transcriptional activity of E4TF1. This is RING1 and YY1-binding protein B (rybpb) from Danio rerio (Zebrafish).